The sequence spans 860 residues: DNA mismatch repair protein MutS (860 aa).

618–625 (GPNMGGKS) is a binding site for ATP.

The protein belongs to the DNA mismatch repair MutS family.

In terms of biological role, this protein is involved in the repair of mismatches in DNA. It is possible that it carries out the mismatch recognition step. This protein has a weak ATPase activity. The chain is DNA mismatch repair protein MutS from Shewanella piezotolerans (strain WP3 / JCM 13877).